A 632-amino-acid polypeptide reads, in one-letter code: tRNA uridine 5-carboxymethylaminomethyl modification enzyme MnmG (632 aa).

FAD is bound by residues glycine 15–glycine 20, isoleucine 127, and serine 182. Glycine 276–phenylalanine 290 is a binding site for NAD(+). Glutamine 373 contributes to the FAD binding site.

This sequence belongs to the MnmG family. In terms of assembly, homodimer. Heterotetramer of two MnmE and two MnmG subunits. Requires FAD as cofactor.

It localises to the cytoplasm. Its function is as follows. NAD-binding protein involved in the addition of a carboxymethylaminomethyl (cmnm) group at the wobble position (U34) of certain tRNAs, forming tRNA-cmnm(5)s(2)U34. This Streptococcus pyogenes serotype M6 (strain ATCC BAA-946 / MGAS10394) protein is tRNA uridine 5-carboxymethylaminomethyl modification enzyme MnmG.